A 449-amino-acid chain; its full sequence is Cryptochrome DASH (449 aa).

Residues 15–147 enclose the Photolyase/cryptochrome alpha/beta domain; the sequence is RLGLFVFRND…PFHETPNNTL (133 aa).

The protein belongs to the DNA photolyase class-1 family. It depends on FAD as a cofactor. (6R)-5,10-methylene-5,6,7,8-tetrahydrofolate serves as cofactor.

In terms of biological role, may have a photoreceptor function. Binds DNA; probably functions as a transcriptional repressor. This chain is Cryptochrome DASH (cry), found in Idiomarina loihiensis (strain ATCC BAA-735 / DSM 15497 / L2-TR).